Reading from the N-terminus, the 364-residue chain is 3'(2'),5'-bisphosphate nucleotidase 1 (364 aa).

Asp54 (proton acceptor) is an active-site residue. Mg(2+)-binding residues include Glu77, Asp141, Ile143, and Asp144. The active-site Proton acceptor is the Thr146. The adenosine 3',5'-bisphosphate site is built by Thr146, His243, Ser272, Lys275, Arg289, and Asp302. AMP contacts are provided by His243, Ser272, Lys275, Arg289, and Asp302. Asp302 serves as a coordination point for Mg(2+).

It belongs to the inositol monophosphatase superfamily. Mg(2+) serves as cofactor.

It carries out the reaction 3'-phosphoadenylyl sulfate + H2O = adenosine 5'-phosphosulfate + phosphate. It catalyses the reaction adenosine 3',5'-bisphosphate + H2O = AMP + phosphate. The enzyme catalyses adenosine 2',5'-bisphosphate + H2O = AMP + phosphate. Its function is as follows. Phosphatase that converts adenosine 3'-phosphate 5'-phosphosulfate (PAPS) to adenosine 5'-phosphosulfate (APS) and 3'(2')-phosphoadenosine 5'-phosphate (PAP) to AMP. Regulates the flux of sulfur in the sulfur-activation pathway by converting PAPS to APS. Involved in salt tolerance. The protein is 3'(2'),5'-bisphosphate nucleotidase 1 (HAL21) of Candida albicans (strain SC5314 / ATCC MYA-2876) (Yeast).